The sequence spans 223 residues: Small ribosomal subunit protein uS3 (223 aa).

The 69-residue stretch at 40-108 folds into the KH type-2 domain; it reads IRELVHRELP…KVHLNIQEIR (69 aa).

This sequence belongs to the universal ribosomal protein uS3 family. As to quaternary structure, part of the 30S ribosomal subunit. Forms a tight complex with proteins S10 and S14.

Its function is as follows. Binds the lower part of the 30S subunit head. Binds mRNA in the 70S ribosome, positioning it for translation. In Thermomicrobium roseum (strain ATCC 27502 / DSM 5159 / P-2), this protein is Small ribosomal subunit protein uS3.